The chain runs to 420 residues: Gamma-glutamyl phosphate reductase (420 aa).

The protein belongs to the gamma-glutamyl phosphate reductase family.

It is found in the cytoplasm. It carries out the reaction L-glutamate 5-semialdehyde + phosphate + NADP(+) = L-glutamyl 5-phosphate + NADPH + H(+). It functions in the pathway amino-acid biosynthesis; L-proline biosynthesis; L-glutamate 5-semialdehyde from L-glutamate: step 2/2. Its function is as follows. Catalyzes the NADPH-dependent reduction of L-glutamate 5-phosphate into L-glutamate 5-semialdehyde and phosphate. The product spontaneously undergoes cyclization to form 1-pyrroline-5-carboxylate. This chain is Gamma-glutamyl phosphate reductase, found in Streptococcus pneumoniae (strain Hungary19A-6).